The chain runs to 483 residues: MAQADIALIGLAVMGQNLILNMNDHGFVVCAFNRTVSKVDDFLANEAKGTKVLGAHSLEEMVSKLKKPRRIILLVKAGQAVDNFIEKLVPLLDIGDIIIDGGNSEYRDTMRRCRDLKDKGILFVGSGVSGGEDGARYGPSLMPGGNKEAWPHIKAIFQGIAAKVGTGEPCCDWVGDDGAGHFVKMVHNGIEYGDMQLICEAYHLMKDVLGLGHKEMAKAFEEWNKTELDSFLIEITASILKFQDADGKHLLPKIRDSAGQKGTGKWTAISALEYGVPVTLIGEAVFARCLSSLKDERIQASKKLKGPQNIPFEGDKKSFLEDIRKALYASKIISYAQGFMLLRQAATEFGWTLNYGGIALMWRGGCIIRSVFLGKIKDAFDRNPGLQNLLLDDFFKSAVENCQDSWRRAISTGVQAGIPMPCFTTALSFYDGYRHAMLPANLIQAQRDYFGAHTYELLAKPGQFIHTNWTGHGGSVSSSSYNA.

Residues G10–G15 and N33–T35 contribute to the NADP(+) site. Position 38 is an N6-acetyllysine (K38). S57 is modified (phosphoserine). Residues V75–A77 and N103 each bind NADP(+). Substrate is bound by residues N103, S129, and G131. S129 is modified (phosphoserine). K184 functions as the Proton acceptor in the catalytic mechanism. Residue H187–N188 coordinates substrate. E191 functions as the Proton donor in the catalytic mechanism. Substrate contacts are provided by Y192, K261, R288, R447, and H453. S478–Y481 is a binding site for NADP(+).

The protein belongs to the 6-phosphogluconate dehydrogenase family. As to quaternary structure, homodimer.

The protein localises to the cytoplasm. The catalysed reaction is 6-phospho-D-gluconate + NADP(+) = D-ribulose 5-phosphate + CO2 + NADPH. It participates in carbohydrate degradation; pentose phosphate pathway; D-ribulose 5-phosphate from D-glucose 6-phosphate (oxidative stage): step 3/3. Catalyzes the oxidative decarboxylation of 6-phosphogluconate to ribulose 5-phosphate and CO(2), with concomitant reduction of NADP to NADPH. This Ovis aries (Sheep) protein is 6-phosphogluconate dehydrogenase, decarboxylating (PGD).